We begin with the raw amino-acid sequence, 74 residues long: Protein krueppel (74 aa).

4 consecutive C2H2-type zinc fingers follow at residues 1 to 4 (ERTH), 10 to 32 (FECP…MRLH), 38 to 60 (YHCS…LRVH), and 66 to 74 (YTCEICDGK).

It belongs to the krueppel C2H2-type zinc-finger protein family.

It is found in the nucleus. Krueppel is a gap class segmentation protein. The polypeptide is Protein krueppel (Kr) (Musca domestica (House fly)).